The primary structure comprises 593 residues: Acetyl-coenzyme A transferase nodX (593 aa).

A disordered region spans residues 572–593 (DEDEQGSGFRSGSGLGSGSIAD). Positions 580-593 (FRSGSGLGSGSIAD) are enriched in gly residues.

This sequence belongs to the CoA-transferase III family.

It participates in secondary metabolite biosynthesis. Its function is as follows. Acetyl-coenzyme A transferase; part of the gene cluster that mediates the biosynthesis of the indole diterpenes nodulisporic acids (NA). Nodulisporic acid A (NAA) and its chemically modified derivatives are of particular significance because of their highly potent insecticidal activity against blood-feeding arthropods and lack of observable adverse effects on mammals, in particular the tremogenicity associated with the paspaline-derived IDTs is not observed. The geranylgeranyl diphosphate (GGPP) synthase ggs1, localized outside of the cluster, is proposed to catalyze the first step in nodulisporic acid biosynthesis via conversion of farnesyl pyrophosphate and isopentyl pyrophosphate into geranylgeranyl pyrophosphate (GGPP). Condensation of indole-3-glycerol phosphate with GGPP by the prenyl transferase nodC then forms 3-geranylgeranylindole (3-GGI). Epoxidation by the FAD-dependent monooxygenase nodM leads to a single-epoxidized-GGI that is substrate of the terpene cyclase nodB for cyclization to yield emindole SB. The terminal methyl carbon, C28, of emindole SB is then oxidized by the cytochrome P450 monooxygenase nodW to produce nodulisporic acid F (NAF), the pentacyclic core of NAA. NAF is converted to nodulisporic acid E (NAE) via prenylation. This step is probably performed by one of the indole diterpene prenyltransferases nodD1 or nodD2. Several oxidation steps performed by the FAD-linked oxidoreductase nodO and one of the cytochrome P450 monooxygenase nodR, nodX or nodZ further convert NAE to nodulisporic acid D (NAD). NAD is substrate of cytochrome P450 monooxygenase nodJ to produce the precursor of nodulisporic acid C (NAC), converted to NAC by one of the indole diterpene prenyltransferases nodD1 or nodD2. The FAD-dependent monooxygenase nodY2 then oxidizes NAC to nodulisporic acid B (NAB). Finally NAB is converted to NAA by one of the cytochrome P450 monooxygenases nodR, nodX or nodZ. In Hypoxylon pulicicidum, this protein is Acetyl-coenzyme A transferase nodX.